The following is a 678-amino-acid chain: Probable metal-nicotianamine transporter YSL6 (678 aa).

14 helical membrane-spanning segments follow: residues 41–61 (VTVRGIVVSAVLGVLFCLITH), 65–85 (LTVGVIPSLNVSAGLLGYFLV), 113–133 (CVVACYGLAFSGGFGSYMLAM), 158–178 (LGWMIGFMFVVSFLGLFSLVA), 226–246 (ISFFWNCFKWFFSGVGDSCGF), 279–299 (IVNCSTLLGAIISWGFLWPYI), 324–344 (VFISVSVILGDGLYNLIKIIY), 394–414 (LAGSGYVGLAAISTATVPMIF), 419–439 (WYLVLCAYVVAPLLAFCNSYG), 467–487 (GGVIAGLAACGVMMSIVSTAA), 512–532 (IGTTLGCIIAPLTFWLYWTAF), 561–581 (SALPQHCLAICSVFFVAAILI), 606–626 (FYIGAYFAIDMFVGTVILFVW), and 641–661 (IASGLICGDGIWSVPSAILSI).

It belongs to the YSL (TC 2.A.67.2) family. As to expression, expressed in roots and leaves.

The protein localises to the membrane. May be involved in the transport of nicotianamine-chelated metals. This chain is Probable metal-nicotianamine transporter YSL6 (YSL6), found in Oryza sativa subsp. japonica (Rice).